The primary structure comprises 505 residues: MAQVINTNSLSLLTQNNLNKSQSSLSSAIERLSSGLRINSAKDDAAGQAIANRFTSNIKGLTQASRNANDGISIAQTTEGALNEINNNLQRVRELSVQATNGTNSDSDLKSIQDEIQQRLEEIDRVSNQTQFNGVKVLSQDNQMKIQVGANDGETITIDLQKIDVKSLGLDGFNVNGPKEATVGDLKSSFKNVTGYDTYAAGADKYRVDINSGAVVTDDAAPDKVYVNAANGQLTTDDAENNTAVNLFKTTKSTAGTDEAKAIASAIKGGKEGDTFDYKGVSFTIDTKAGNDGNGTVSTTINGEKVTLTVADITAGAANVNDATLQSSKNVYTSVVNGQFTFDDKTKNESAKLSDLEANNAVKGESKITVNGAEYTANAAGDKVTLAGKTMFIDKTASGVSTLINEDAAAAKKSTANPLASIDSALSKVDAVRSSLGAIQNRFDSAITNLGNTVTNLNSARSRIEDADYATEVSNMSKAQILQQAGTSVLAQANQVPQNVLSLLR.

The protein belongs to the bacterial flagellin family.

Its subcellular location is the secreted. The protein resides in the bacterial flagellum. Flagellin is the subunit protein which polymerizes to form the filaments of bacterial flagella. This is Flagellin (fliC) from Salmonella senftenberg.